Consider the following 434-residue polypeptide: UDP-N-acetylenolpyruvoylglucosamine reductase (434 aa).

Residues 51–238 (IGAAPAGVVE…TAVEFQLTTD (188 aa)) enclose the FAD-binding PCMH-type domain. Residue Arg216 is part of the active site. The Proton donor role is filled by Ser299. Glu425 is an active-site residue.

It belongs to the MurB family. It depends on FAD as a cofactor.

Its subcellular location is the cytoplasm. It catalyses the reaction UDP-N-acetyl-alpha-D-muramate + NADP(+) = UDP-N-acetyl-3-O-(1-carboxyvinyl)-alpha-D-glucosamine + NADPH + H(+). Its pathway is cell wall biogenesis; peptidoglycan biosynthesis. In terms of biological role, cell wall formation. This Corynebacterium jeikeium (strain K411) protein is UDP-N-acetylenolpyruvoylglucosamine reductase.